We begin with the raw amino-acid sequence, 186 residues long: ADP compounds hydrolase NudE (186 aa).

Glu40 lines the substrate pocket. The Nudix hydrolase domain maps to 45-172 (TNREAVMIVP…DFNEARNVSA (128 aa)). The short motif at 80–101 (GLIDPGESVYEAANRELKEEVG) is the Nudix box element. The a divalent metal cation site is built by Glu95 and Glu99. Position 118 (Ser118) interacts with substrate.

Belongs to the Nudix hydrolase family. In terms of assembly, homodimer. Requires Mg(2+) as cofactor.

The enzyme catalyses ADP-D-ribose + H2O = D-ribose 5-phosphate + AMP + 2 H(+). Functionally, active on adenosine(5')triphospho(5')adenosine (Ap3A), ADP-ribose, NADH, adenosine(5')diphospho(5')adenosine (Ap2A). This Escherichia coli (strain K12) protein is ADP compounds hydrolase NudE (nudE).